The following is a 111-amino-acid chain: Class I hydrophobin 2 (111 aa).

Residues 1–21 (MFSRVMFCTFLILPLLAAATA) form the signal peptide. 4 disulfides stabilise this stretch: C30-C90, C37-C84, C38-C71, and C91-C104.

This sequence belongs to the fungal hydrophobin family. Self-assembles to form functional amyloid fibrils called rodlets. Self-assembly into fibrillar rodlets occurs spontaneously at hydrophobic:hydrophilic interfaces and the rodlets further associate laterally to form amphipathic monolayers. Behavior depends on environmental conditions: (1) when the pH increases or in the presence of Ca(2+) ions, an assembled state, beta-sheet rich, is formed; (2) when the solvent polarity increases, the vhm2 shows an increased tendency to reach hydrophobic/hydrophilic interfaces, with no detectable conformational change; and (3) at high temperature, a reversible conformational change and reversible aggregation occur. The physical and chemical properties, both in solution and as a biofilm, are affected by polysaccharides that act as hydrophilic stabilizer.

The protein resides in the secreted. The protein localises to the cell wall. Functionally, aerial growth, conidiation, and dispersal of filamentous fungi in the environment rely upon a capability of their secreting small amphipathic proteins called hydrophobins (HPBs) with low sequence identity. Class I can self-assemble into an outermost layer of rodlet bundles on aerial cell surfaces, conferring cellular hydrophobicity that supports fungal growth, development and dispersal; whereas Class II form highly ordered films at water-air interfaces through intermolecular interactions but contribute nothing to the rodlet structure. Vmh2 is a class I hydrophobin involved in biofilm formation and is essential for the maintenance of the surface hydrophobicity of the mycelium. Seems not to be involved in hyphal resistance against environmental stress. In Pleurotus ostreatus (strain PC15) (Oyster mushroom), this protein is Class I hydrophobin 2.